Here is a 311-residue protein sequence, read N- to C-terminus: Heme A synthase (311 aa).

Over 1–6 the chain is Cytoplasmic; the sequence is MQRFIK. A helical membrane pass occupies residues 7–27; that stretch reads WLAVITSLDLLIVLLGGALVT. The Extracellular portion of the chain corresponds to 28–62; that stretch reads KTGSGQGCGKSWPLCNGEFVPSNLSMETIIELSHR. C35 and C42 are disulfide-bonded. Residue E58 is part of the active site. Position 61 (H61) interacts with heme o. The chain crosses the membrane as a helical span at residues 63 to 83; the sequence is LTSGSAGILVTLLCILSWKYY. Over 84–91 the chain is Cytoplasmic; sequence KHVRETKT. The chain crosses the membrane as a helical span at residues 92–112; sequence LAILSFVFLVAQALMGAAAVV. The Extracellular segment spans residues 113–121; it reads WGQMPAVLA. Residues 122–142 form a helical membrane-spanning segment; that stretch reads IHFGISLISFASVILLTCLIF. H123 is a heme o binding site. The Cytoplasmic portion of the chain corresponds to 143–159; sequence EIDQKFDARSLIMDKKM. Residues 160-180 traverse the membrane as a helical segment; the sequence is KFHIYGVTIYCYLVVYTGALV. Topologically, residues 181 to 211 are extracellular; the sequence is RHERASLACPDFPLCSKNRPMPTQLHEWVQM. Cysteines 189 and 195 form a disulfide. Residues 212–232 traverse the membrane as a helical segment; it reads GHRLAAMLIFVWILYAMILAI. H213 contributes to the heme b binding site. The Cytoplasmic portion of the chain corresponds to 233–243; the sequence is RHYKQQPVVYW. A helical membrane pass occupies residues 244-264; it reads GWIISFILVTLQAIVGILVVF. Residues 265-271 are Extracellular-facing; sequence TNASLAM. Residues 272–292 form a helical membrane-spanning segment; sequence ALLHSLFISCLFAVLCYLVML. H275 lines the heme b pocket. The Cytoplasmic segment spans residues 293–311; that stretch reads GTRSKVNAKEAASTSKQTK.

This sequence belongs to the COX15/CtaA family. Type 1 subfamily. In terms of assembly, interacts with CtaB. It depends on heme b as a cofactor.

It is found in the cell membrane. It catalyses the reaction Fe(II)-heme o + 2 A + H2O = Fe(II)-heme a + 2 AH2. Its pathway is porphyrin-containing compound metabolism; heme A biosynthesis; heme A from heme O: step 1/1. Catalyzes the conversion of heme O to heme A by two successive hydroxylations of the methyl group at C8. The first hydroxylation forms heme I, the second hydroxylation results in an unstable dihydroxymethyl group, which spontaneously dehydrates, resulting in the formyl group of heme A. The polypeptide is Heme A synthase (Bacillus cereus (strain 03BB102)).